The sequence spans 675 residues: Regulator of G-protein signaling 9 (675 aa).

Residues Pro30 to Thr105 enclose the DEP domain. The G protein gamma domain occupies Val222–Lys283. An RGS domain is found at Asn299–Leu414. Disordered stretches follow at residues Arg524 to Ala571 and Asp637 to Val662. Over residues Ser542 to Thr551 the composition is skewed to polar residues. Basic and acidic residues-rich tracts occupy residues Glu552–Arg562 and Asp646–Val662.

In terms of assembly, heterodimer with GNB5. Interacts with RGS7BP, leading to regulate the subcellular location of the heterodimer formed with GNB5. Component of the RGS9-1-Gbeta5 complex composed of RGS9 (RGS9-1), Gbeta5 (GNB5) and RGS9BP. Interacts with PDE6G and GNAT1. Post-translationally, retinal isoform 1 is light-dependent phosphorylated at 'Ser-475'. Phosphorylation is decreased by light exposition. Interaction with RGS9BP is decreased when isoform 1 is phosphorylated at 'Ser-475'. As to expression, isoform 1 is expressed in photoreceptor outer segments. Isoform 2 is expressed in brain striatum.

It localises to the membrane. In terms of biological role, inhibits signal transduction by increasing the GTPase activity of G protein alpha subunits thereby driving them into their inactive GDP-bound form. Binds to GNAT1. Involved in phototransduction; key element in the recovery phase of visual transduction. The sequence is that of Regulator of G-protein signaling 9 (Rgs9) from Mus musculus (Mouse).